The sequence spans 313 residues: tRNA (guanine-N(7)-)-methyltransferase (313 aa).

S-adenosyl-L-methionine contacts are provided by E33, E58, and D85. Residues K112, D144, and 177–180 (TRYE) contribute to the substrate site.

The protein belongs to the class I-like SAM-binding methyltransferase superfamily. TrmB family.

It carries out the reaction guanosine(46) in tRNA + S-adenosyl-L-methionine = N(7)-methylguanosine(46) in tRNA + S-adenosyl-L-homocysteine. Its pathway is tRNA modification; N(7)-methylguanine-tRNA biosynthesis. Its function is as follows. Catalyzes the formation of N(7)-methylguanine at position 46 (m7G46) in tRNA. This chain is tRNA (guanine-N(7)-)-methyltransferase, found in Thermotoga maritima (strain ATCC 43589 / DSM 3109 / JCM 10099 / NBRC 100826 / MSB8).